Consider the following 252-residue polypeptide: Chitooligosaccharide deacetylase (252 aa).

Mg(2+) is bound by residues histidine 61 and histidine 125.

The protein belongs to the YdjC deacetylase family. ChbG subfamily. As to quaternary structure, homodimer. The cofactor is Mg(2+).

The protein resides in the cytoplasm. It carries out the reaction N,N'-diacetylchitobiose + H2O = N-acetyl-beta-D-glucosaminyl-(1-&gt;4)-D-glucosamine + acetate. The catalysed reaction is diacetylchitobiose-6'-phosphate + H2O = N'-monoacetylchitobiose-6'-phosphate + acetate. The protein operates within glycan degradation; chitin degradation. Its function is as follows. Involved in the degradation of chitin. ChbG is essential for growth on the acetylated chitooligosaccharides chitobiose and chitotriose but is dispensable for growth on cellobiose and chitosan dimer, the deacetylated form of chitobiose. Deacetylation of chitobiose-6-P and chitotriose-6-P is necessary for both the activation of the chb promoter by the regulatory protein ChbR and the hydrolysis of phosphorylated beta-glucosides by the phospho-beta-glucosidase ChbF. Catalyzes the removal of only one acetyl group from chitobiose-6-P to yield monoacetylchitobiose-6-P, the inducer of ChbR and the substrate of ChbF. The polypeptide is Chitooligosaccharide deacetylase (Escherichia coli O6:K15:H31 (strain 536 / UPEC)).